The chain runs to 194 residues: Adenylate kinase (194 aa).

ATP is bound at residue 10 to 15; sequence GAGKGT. The NMP stretch occupies residues 30 to 59; that stretch reads STGDMLRAAVAQQSEIGKRAKAVMDAGQLV. Residues Thr31, Arg36, 57 to 59, 85 to 88, and Gln92 contribute to the AMP site; these read QLV and GYPR. Residues 126-142 are LID; that stretch reads SRVAETIAKGAQVRSDD. Arg127 is an ATP binding site. Residues Arg139 and Arg150 each coordinate AMP. Ala178 is a binding site for ATP.

This sequence belongs to the adenylate kinase family. In terms of assembly, monomer.

It is found in the cytoplasm. It catalyses the reaction AMP + ATP = 2 ADP. Its pathway is purine metabolism; AMP biosynthesis via salvage pathway; AMP from ADP: step 1/1. Catalyzes the reversible transfer of the terminal phosphate group between ATP and AMP. Plays an important role in cellular energy homeostasis and in adenine nucleotide metabolism. The protein is Adenylate kinase of Brucella melitensis biotype 1 (strain ATCC 23456 / CCUG 17765 / NCTC 10094 / 16M).